The following is a 101-amino-acid chain: uncharacterized protein (101 aa).

The protein localises to the plastid. The protein resides in the chloroplast. This is an uncharacterized protein from Chlamydomonas reinhardtii (Chlamydomonas smithii).